We begin with the raw amino-acid sequence, 309 residues long: Tagatose-6-phosphate kinase (309 aa).

This sequence belongs to the carbohydrate kinase PfkB family. LacC subfamily.

The catalysed reaction is D-tagatofuranose 6-phosphate + ATP = D-tagatofuranose 1,6-bisphosphate + ADP + H(+). The protein operates within carbohydrate metabolism; D-tagatose 6-phosphate degradation; D-glyceraldehyde 3-phosphate and glycerone phosphate from D-tagatose 6-phosphate: step 1/2. The sequence is that of Tagatose-6-phosphate kinase from Streptococcus pneumoniae (strain ATCC 700669 / Spain 23F-1).